Here is a 37-residue protein sequence, read N- to C-terminus: Dolichyl-diphosphooligosaccharide--protein glycosyltransferase subunit 4 (37 aa).

Residues 1-4 (MITD) lie on the Lumenal side of the membrane. A helical membrane pass occupies residues 5–25 (VQLAIFANMLGVSLFLLVVLY). The Cytoplasmic segment spans residues 26–37 (HYVAVNNPKKQE).

This sequence belongs to the OST4 family. Component of the oligosaccharyltransferase (OST) complex. OST exists in two different complex forms which contain common core subunits RPN1, RPN2, OST48, OST4, DAD1 and TMEM258, either STT3A or STT3B as catalytic subunits, and form-specific accessory subunits. STT3A complex assembly occurs through the formation of 3 subcomplexes. Subcomplex 1 contains RPN1 and TMEM258, subcomplex 2 contains the STT3A-specific subunits STT3A, DC2/OSTC, and KCP2 as well as the core subunit OST4, and subcomplex 3 contains RPN2, DAD1, and OST48. The STT3A complex can form stable complexes with the Sec61 complex or with both the Sec61 and TRAP complexes.

It localises to the endoplasmic reticulum. The protein localises to the endoplasmic reticulum membrane. Its pathway is protein modification; protein glycosylation. Subunit of the oligosaccharyl transferase (OST) complex that catalyzes the initial transfer of a defined glycan (Glc(3)Man(9)GlcNAc(2) in eukaryotes) from the lipid carrier dolichol-pyrophosphate to an asparagine residue within an Asn-X-Ser/Thr consensus motif in nascent polypeptide chains, the first step in protein N-glycosylation. N-glycosylation occurs cotranslationally and the complex associates with the Sec61 complex at the channel-forming translocon complex that mediates protein translocation across the endoplasmic reticulum (ER). All subunits are required for a maximal enzyme activity. Specifically involved in maintaining stability of STT3A-containing OST complexes. The sequence is that of Dolichyl-diphosphooligosaccharide--protein glycosyltransferase subunit 4 from Homo sapiens (Human).